A 362-amino-acid chain; its full sequence is 3-isopropylmalate dehydrogenase (362 aa).

R97, R107, R135, and D225 together coordinate substrate. Positions 225, 249, and 253 each coordinate Mg(2+). Position 283–295 (283–295 (GSAPDIAHKNLAN)) interacts with NAD(+).

It belongs to the isocitrate and isopropylmalate dehydrogenases family. LeuB type 1 subfamily. Homodimer. It depends on Mg(2+) as a cofactor. Requires Mn(2+) as cofactor.

Its subcellular location is the cytoplasm. It catalyses the reaction (2R,3S)-3-isopropylmalate + NAD(+) = 4-methyl-2-oxopentanoate + CO2 + NADH. It functions in the pathway amino-acid biosynthesis; L-leucine biosynthesis; L-leucine from 3-methyl-2-oxobutanoate: step 3/4. Its function is as follows. Catalyzes the oxidation of 3-carboxy-2-hydroxy-4-methylpentanoate (3-isopropylmalate) to 3-carboxy-4-methyl-2-oxopentanoate. The product decarboxylates to 4-methyl-2 oxopentanoate. In Prochlorococcus marinus (strain SARG / CCMP1375 / SS120), this protein is 3-isopropylmalate dehydrogenase.